The following is an 804-amino-acid chain: Probable cadmium-transporting ATPase (804 aa).

2 consecutive HMA domains span residues 11–74 and 89–152; these read DKQV…LKVA and DKNV…LKVI. Cd(2+) is bound by residues C22, C25, C100, and C103. The next 5 membrane-spanning stretches (helical) occupy residues 183 to 203, 207 to 227, 248 to 268, 413 to 433, and 441 to 461; these read STLL…FVNG, LVTS…LFKV, IGAA…LFAI, IIMV…GGSW, and LAVL…ISIV. Catalysis depends on D492, which acts as the 4-aspartylphosphate intermediate. 2 consecutive transmembrane segments (helical) span residues 749 to 771 and 776 to 798; these read LNII…LLVI and TLWI…SLRL.

Belongs to the cation transport ATPase (P-type) (TC 3.A.3) family. Type IB subfamily.

The protein resides in the cell membrane. The catalysed reaction is Cd(2+)(in) + ATP + H2O = Cd(2+)(out) + ADP + phosphate + H(+). Functionally, couples the hydrolysis of ATP with the export of cadmium. Involved in cadmium resistance. The polypeptide is Probable cadmium-transporting ATPase (cadA) (Staphylococcus aureus).